We begin with the raw amino-acid sequence, 113 residues long: MNTVRVTFLLVFVLAVSLGQADKDENRMEMQEKTEQGKSYLDFAENLLLQKLEELEAKLLEEDSEESRNSRQKRCIGEGVPCDEKDPRCCSGLVCLKPTLHGIWYKSYYCYRK.

The signal sequence occupies residues 1 to 21 (MNTVRVTFLLVFVLAVSLGQA). The propeptide occupies 22–74 (DKDENRMEMQEKTEQGKSYLDFAENLLLQKLEELEAKLLEEDSEESRNSRQKR). The tract at residues 61 to 82 (EEDSEESRNSRQKRCIGEGVPC) is disordered. 3 cysteine pairs are disulfide-bonded: Cys-75–Cys-90, Cys-82–Cys-95, and Cys-89–Cys-110.

The protein belongs to the neurotoxin 14 (magi-1) family. 01 (HNTX-16) subfamily. As to expression, expressed by the venom gland.

The protein resides in the secreted. Functionally, probable ion channel inhibitor. This chain is U11-theraphotoxin-Hhn1q, found in Cyriopagopus hainanus (Chinese bird spider).